A 251-amino-acid chain; its full sequence is tRNA pseudouridine synthase A (251 aa).

Asp26 acts as the Nucleophile in catalysis. Tyr98 is a substrate binding site.

The protein belongs to the tRNA pseudouridine synthase TruA family. In terms of assembly, homodimer.

It carries out the reaction uridine(38/39/40) in tRNA = pseudouridine(38/39/40) in tRNA. Its function is as follows. Formation of pseudouridine at positions 38, 39 and 40 in the anticodon stem and loop of transfer RNAs. The polypeptide is tRNA pseudouridine synthase A (Mycolicibacterium paratuberculosis (strain ATCC BAA-968 / K-10) (Mycobacterium paratuberculosis)).